The sequence spans 799 residues: MASLLQDRLTTDQDLLLMQEGMPMRKVRSKSWKKLRYFRLQNDGMTVWHARQARGSAKPSFSISDVETIRNGHDSELLRSLTEELPLEQGFTVVFHGRRSNLDLVANSVEEAQIWMRGLHLLVDLVTSMDHQERLDQWLSDWFQRGDKNQDGKMSFQEVQRLLHLMNVEMDQEYAFSLFQAADTSQSGTLEGEEFVEFYKALTKRAEVQELFESFSADGQKLTLLEFSDFLREEQKERDCTSELALELIDRYEPSDSGKLRHVLSMDGFLSYLCSKDGDIFNPACLPIYQDMTQPLNHYFICSSHNTYLVGDQLCGQSSVEGYIRALKRGCRCVEVDVWDGPSGEPVVYHGHTLTSRILFKDVVATVAQYAFQTSDYPVILSLETHCSWEQQQTMARHLTEILGEQLLSTTLDGVLPTQLPSPEELRRKILVKGKKLTLEEDLEYEEEEVEPGLEGEHESELALESQFETESEPEPQEQNLQIKDKKKVVTCPLFCPSICCQIVAQAPISKPGSLLLSQQKSKTILCPALSSLVIYLKSVSFRSFTHSKKHYHFYEISSFSETKAKRLIKEAGNEFVQHNTWQLSRVYPSGLRTDSSNYNPQELWNAGCQMVAMNMQTAGLEMDICDGHFRQNGGCGYVLKPDFLRDNQSSFHPERPISPFKAQTLLIQVISGQQLPKLNKTKEGSIVDPLVKVQIFGVRLDTARQETNYVENNGFNPYWGQTLCFRVLVPELAMLRFVVMDYDWKSRNDFIGQYTLPWSCMQQGYRHIHLLSKDGISLCPASIFVYICIREGLEGDES.

The 109-residue stretch at 16–124 (LLMQEGMPMR…WMRGLHLLVD (109 aa)) folds into the PH domain. The interval 26-53 (KVRSKSWKKLRYFRLQNDGMTVWHARQA) is substrate binding. 3 EF-hand domains span residues 134–169 (RLDQ…MNVE), 170–205 (MDQE…LTKR), and 206–237 (AEVQ…EQKE). Asp147, Asn149, Asp151, Lys153, Glu158, Asp183, Ser185, Ser187, Thr189, and Glu194 together coordinate Ca(2+). The GBA signature appears at 213–243 (ESFSADGQKLTLLEFSDFLREEQKERDCTSE). The 146-residue stretch at 290–435 (QDMTQPLNHY…LRRKILVKGK (146 aa)) folds into the PI-PLC X-box domain. His305 is an active-site residue. 3 residues coordinate Ca(2+): Asn306, Glu335, and Asp337. The active site involves His350. Glu384 contacts Ca(2+). Substrate-binding residues include Lys433 and Lys435. Ser460 carries the post-translational modification Phosphoserine. The 117-residue stretch at 530-646 (LSSLVIYLKS…GYVLKPDFLR (117 aa)) folds into the PI-PLC Y-box domain. Substrate contacts are provided by Ser559 and Arg586. Positions 646-773 (RDNQSSFHPE…QGYRHIHLLS (128 aa)) constitute a C2 domain. Residues Ile687, Asp689, Asn713, Asp742, Tyr743, and Asp744 each coordinate Ca(2+). Positions 768–771 (HIHL) match the PDZ-binding motif.

Interacts with GRIP1. Interacts (via GBA motif) with guanine nucleotide-binding protein G(i) alpha subunit GNAI3 (inactive GDP-bound form); low-affinity interaction. Ca(2+) is required as a cofactor.

The protein resides in the membrane. It is found in the nucleus. It localises to the cytoplasm. The protein localises to the endoplasmic reticulum. The enzyme catalyses a 1,2-diacyl-sn-glycero-3-phospho-(1D-myo-inositol-4,5-bisphosphate) + H2O = 1D-myo-inositol 1,4,5-trisphosphate + a 1,2-diacyl-sn-glycerol + H(+). It carries out the reaction a 1,2-diacyl-sn-glycero-3-phospho-(1D-myo-inositol) + H2O = 1D-myo-inositol 1-phosphate + a 1,2-diacyl-sn-glycerol + H(+). In terms of biological role, hydrolyzes the phosphatidylinositol 4,5-bisphosphate (PIP2) to generate 2 second messenger molecules diacylglycerol (DAG) and inositol 1,4,5-trisphosphate (IP3). DAG mediates the activation of protein kinase C (PKC), while IP3 releases Ca(2+) from intracellular stores. Required for acrosome reaction in sperm during fertilization, probably by acting as an important enzyme for intracellular Ca(2+) mobilization in the zona pellucida-induced acrosome reaction. May play a role in cell growth. Modulates the liver regeneration in cooperation with nuclear PKC. Overexpression up-regulates the Erk signaling pathway and proliferation. The protein is 1-phosphatidylinositol 4,5-bisphosphate phosphodiesterase delta-4 (PLCD4) of Macaca fascicularis (Crab-eating macaque).